A 413-amino-acid chain; its full sequence is Putative competence-damage inducible protein (413 aa).

This sequence belongs to the CinA family.

The protein is Putative competence-damage inducible protein of Alkaliphilus oremlandii (strain OhILAs) (Clostridium oremlandii (strain OhILAs)).